The sequence spans 1363 residues: MQPGAALNLRLWLCLGLLQGLANGYSMTPPTLNITEDSYVIDTGDSLSISCRGQHPLEWTWPGAQEVLTTGGKDSEDTRVVHDCEGTEARPYCKVLLLAQTHANNTGSYHCYYKYIKARIEGTTAASTYVFVRDFKHPFINKPDTLLVNRKDSMWVPCLVSIPGLNITLRSQSSALHPDGQEVLWDDRRGMRVPTQLLRDALYLQCETTWGDQNFLSNLFVVHITGNELYDIQLYPKKSMELLVGEKLVLNCTVWAEFDSGVTFDWDYPGKQAERAKWVPERRSQQTHTELSSILTIHNVSQNDLGPYVCEANNGIQRFRESTEVIVHEKPFISVEWLKGPVLEATAGDELVKLPVKLAAYPPPEFQWYKDRKAVTGRHNPHALVLKEVTEASAGVYTLALWNSAAGLRQNISLELVVNVPPHIHEKEASSPSIYSRHSRQTLTCTAYGVPQPLSVQWHWRPWTPCKTFAQRSLRRRQQRDGMPQCRDWKEVTTQDAVNPIESLDSWTEFVEGKNKTVSKLVIQDANVSAMYKCVVVNKVGQDERLIYFYVTTIPDGFSIESEPSEDPLEGQSVRLSCRADNYTYEHLRWYRLNLSTLHDAQGNPLLLDCKNVHLFATPLEANLEEAEPGARHATLSLNIPRVAPEDEGDYVCEVQDRRSQDKHCHKKYLSVQALEAPRLTQNLTDLLVNVSDSLEMRCPVAGAHVPSIVWYKDERLLEKESGIDLADSNQRLSIQRVREEDAGRYLCSVCNAKGCVNSSASVAVEGSEDKGSMEIVILIGTGVIAVFFWVLLLLIFCNMKRPAHADIKTGYLSIIMDPGEVPLEEQCEYLSYDASQWEFPRERLHLGRVLGHGAFGKVVEASAFGINKGSSCDTVAVKMLKEGATASEHRALMSELKILIHIGNHLNVVNLLGACTKPNGPLMVIVEFCKYGNLSNFLRVKRDTFNPYAEKSPEQRRRFRAMVEGAKADRRRPGSSDRALFTRFLMGKGSARRAPLVQEAEDLWLSPLTMEDLVCYSFQVARGMEFLASRKCIHRDLAARNILLSESDIVKICDFGLARDIYKDPDYVRKGSARLPLKWMAPESIFDKVYTTQSDVWSFGVLLWEIFSLGASPYPGVQINEEFCQRLKDGTRMRAPELATPAIRHIMQSCWSGDPKARPAFSDLVEILGDLLQGGGWQEEEEERMALHSSQSSEEDGFMQASTTALHITEADADDSPPSMHCHSLAARYYNCVSFPGRLARGTKTPGSSRMKTFEELPMTPTTYKASMDNQTDSGMVLASEEFEELESRHRPEGSFSCKGPGQHMDIPRGHPDPQGRRRRPTQGAQGGKVFYNNEYGEVSQPCTEGDCCPSAGSTFFADSSY.

Residues 1–24 form the signal peptide; that stretch reads MQPGAALNLRLWLCLGLLQGLANG. The Extracellular segment spans residues 25-775; the sequence is YSMTPPTLNI…EGSEDKGSME (751 aa). N-linked (GlcNAc...) asparagine glycosylation is found at Asn-33, Asn-104, Asn-166, Asn-251, Asn-299, and Asn-411. Ig-like C2-type domains lie at 44–118, 151–213, 230–326, 331–415, 422–552, 555–671, and 678–764; these read GDSL…YIKA, KDSM…WGDQ, YDIQ…TEVI, PFIS…ISLE, PHIH…FYVT, PDGF…KYLS, and PRLT…ASVA. Intrachain disulfides connect Cys-51–Cys-111 and Cys-158–Cys-206. Cys-252 and Cys-310 are disulfide-bonded. Cystine bridges form between Cys-445/Cys-534, Cys-466/Cys-486, and Cys-578/Cys-653. Asn-515, Asn-527, Asn-582, Asn-594, Asn-683, and Asn-690 each carry an N-linked (GlcNAc...) asparagine glycan. A disulfide bridge links Cys-699 with Cys-751. The N-linked (GlcNAc...) asparagine glycan is linked to Asn-758. The helical transmembrane segment at 776-796 threads the bilayer; the sequence is IVILIGTGVIAVFFWVLLLLI. The Cytoplasmic segment spans residues 797–1363; sequence FCNMKRPAHA…GSTFFADSSY (567 aa). Residues Tyr-830 and Tyr-833 each carry the phosphotyrosine; by SRC modification. The region spanning 845–1173 is the Protein kinase domain; the sequence is LHLGRVLGHG…DLVEILGDLL (329 aa). Residues 851 to 859 and Lys-879 each bind ATP; that span reads LGHGAFGKV. The Proton acceptor role is filled by Asp-1037. Tyr-1063 is modified (phosphotyrosine; by autocatalysis and SRC). Residues Tyr-1068, Tyr-1230, Tyr-1231, and Tyr-1265 each carry the phosphotyrosine; by autocatalysis modification. Residues 1288–1330 form a disordered region; it reads ESRHRPEGSFSCKGPGQHMDIPRGHPDPQGRRRRPTQGAQGGK. A compositionally biased stretch (basic and acidic residues) spans 1307–1317; it reads DIPRGHPDPQG. Phosphotyrosine; by autocatalysis and SRC is present on residues Tyr-1333 and Tyr-1337. Phosphotyrosine; by autocatalysis is present on Tyr-1363.

This sequence belongs to the protein kinase superfamily. Tyr protein kinase family. CSF-1/PDGF receptor subfamily. As to quaternary structure, interacts with VEGFC and VEGFD. Monomer in the absence of bound VEGFC or VEGFD. Homodimer in the presence of bound VEGFC or VEGFD. Can also form a heterodimer with KDR. Interacts with PTPN14; the interaction is enhanced by stimulation with VEGFC. Interacts with CRK, GRB2, PTK2/FAK1, SHC1, PIK3R1 and PTPN11/SHP-2. Identified in a complex with SRC and ITGB1. In terms of processing, autophosphorylated on tyrosine residues upon ligand binding. Autophosphorylation occurs in trans, i.e. one subunit of the dimeric receptor phosphorylates tyrosine residues on the other subunit. Phosphorylation in response to H(2)O(2) is mediated by a process that requires SRC and PRKCD activity. Phosphorylation at Tyr-1068 is required for autophosphorylation at additional tyrosine residues. Phosphorylation at Tyr-1063 and Tyr-1337 is important for interaction with CRK and subsequent activation of MAPK8. Phosphorylation at Tyr-1230, Tyr-1231 and Tyr-1337 is important for interaction with GRB2 and subsequent activation of the AKT1 and MAPK1/ERK2 and/or MAPK3/ERK1 signaling pathways. In response to endothelial cell adhesion onto collagen, can also be phosphorylated in the absence of FLT4 kinase activity by SRC. In terms of tissue distribution, expressed in adult lung and liver, and in fetal liver, brain, intestine and placenta.

Its subcellular location is the cell membrane. It is found in the cytoplasm. The protein resides in the nucleus. It catalyses the reaction L-tyrosyl-[protein] + ATP = O-phospho-L-tyrosyl-[protein] + ADP + H(+). Present in an inactive conformation in the absence of bound ligand. Binding of VEGFC or VEGFD leads to dimerization and activation by autophosphorylation on tyrosine residues. Tyrosine-protein kinase that acts as a cell-surface receptor for VEGFC and VEGFD, and plays an essential role in adult lymphangiogenesis and in the development of the vascular network and the cardiovascular system during embryonic development. Promotes proliferation, survival and migration of endothelial cells, and regulates angiogenic sprouting. Signaling by activated FLT4 leads to enhanced production of VEGFC, and to a lesser degree VEGFA, thereby creating a positive feedback loop that enhances FLT4 signaling. Modulates KDR signaling by forming heterodimers. Mediates activation of the MAPK1/ERK2, MAPK3/ERK1 signaling pathway, of MAPK8 and the JUN signaling pathway, and of the AKT1 signaling pathway. Phosphorylates SHC1. Mediates phosphorylation of PIK3R1, the regulatory subunit of phosphatidylinositol 3-kinase. Promotes phosphorylation of MAPK8 at 'Thr-183' and 'Tyr-185', and of AKT1 at 'Ser-473'. This chain is Vascular endothelial growth factor receptor 3 (Flt4), found in Mus musculus (Mouse).